The sequence spans 635 residues: Threonine--tRNA ligase (635 aa).

One can recognise a TGS domain in the interval 1 to 61 (MIAITLPDGS…EQNVDLAIVT (61 aa)). Residues 242–533 (DHRKLGKLLD…LLENHAGALP (292 aa)) are catalytic. Residues C333, H384, and H510 each contribute to the Zn(2+) site.

It belongs to the class-II aminoacyl-tRNA synthetase family. In terms of assembly, homodimer. Zn(2+) serves as cofactor.

It localises to the cytoplasm. The catalysed reaction is tRNA(Thr) + L-threonine + ATP = L-threonyl-tRNA(Thr) + AMP + diphosphate + H(+). In terms of biological role, catalyzes the attachment of threonine to tRNA(Thr) in a two-step reaction: L-threonine is first activated by ATP to form Thr-AMP and then transferred to the acceptor end of tRNA(Thr). Also edits incorrectly charged L-seryl-tRNA(Thr). This is Threonine--tRNA ligase from Ralstonia nicotianae (strain ATCC BAA-1114 / GMI1000) (Ralstonia solanacearum).